The following is a 114-amino-acid chain: Putative cysteine proteinase inhibitor 9 (114 aa).

The first 23 residues, 1 to 23 (MRTSSLVLFAAVAVFGAACTAAA), serve as a signal peptide directing secretion.

This sequence belongs to the cystatin family. Phytocystatin subfamily.

It localises to the secreted. Its function is as follows. Specific inhibitor of cysteine proteinases. Probably involved in the regulation of endogenous processes and in defense against pests and pathogens. The protein is Putative cysteine proteinase inhibitor 9 of Oryza sativa subsp. japonica (Rice).